Reading from the N-terminus, the 43-residue chain is Protein PsbN (43 aa).

Residues 5–27 (TLVAIFISGSLVSFTGYALYTAF) traverse the membrane as a helical segment.

Belongs to the PsbN family.

It localises to the plastid. The protein localises to the chloroplast thylakoid membrane. Its function is as follows. May play a role in photosystem I and II biogenesis. The chain is Protein PsbN from Nelumbo lutea (American lotus).